The chain runs to 197 residues: Tyrosine-protein phosphatase-like protein OCA2 (197 aa).

The 151-residue stretch at Ser10–Asn160 folds into the Tyrosine-protein phosphatase domain. Ser181 carries the phosphoserine modification.

This sequence belongs to the protein-tyrosine phosphatase family.

Its subcellular location is the cytoplasm. Required for normal growth in the presence of linoleic acid hydroperoxide (LoaOOH). The sequence is that of Tyrosine-protein phosphatase-like protein OCA2 (OCA2) from Saccharomyces cerevisiae (strain ATCC 204508 / S288c) (Baker's yeast).